We begin with the raw amino-acid sequence, 241 residues long: Uridylate kinase (241 aa).

ATP is bound at residue 11 to 14; sequence KFSG. Residues 19-24 are involved in allosteric activation by GTP; it reads GENGFG. Gly53 contributes to the UMP binding site. ATP contacts are provided by Gly54 and Arg58. UMP contacts are provided by residues Asp74 and 135–142; that span reads TGNPFFTT. Positions 162, 168, and 171 each coordinate ATP.

Belongs to the UMP kinase family. In terms of assembly, homohexamer.

The protein resides in the cytoplasm. It carries out the reaction UMP + ATP = UDP + ADP. It functions in the pathway pyrimidine metabolism; CTP biosynthesis via de novo pathway; UDP from UMP (UMPK route): step 1/1. Its activity is regulated as follows. Allosterically activated by GTP. Inhibited by UTP. Functionally, catalyzes the reversible phosphorylation of UMP to UDP. This is Uridylate kinase from Wolinella succinogenes (strain ATCC 29543 / DSM 1740 / CCUG 13145 / JCM 31913 / LMG 7466 / NCTC 11488 / FDC 602W) (Vibrio succinogenes).